We begin with the raw amino-acid sequence, 369 residues long: Putative FAD-dependent oxidoreductase LodB (369 aa).

FAD-binding positions include 10–14 (GGGPA) and R103.

The cofactor is FAD.

It localises to the cytoplasm. In terms of biological role, is required for lysine-epsilon oxidase (LOD) activity in M.mediterranea. May be involved in the generation of the quinonic cofactor of LodA, leading to the active form of LodA containing a tyrosine-derived quinone cofactor. This is Putative FAD-dependent oxidoreductase LodB (lodB) from Marinomonas mediterranea (strain ATCC 700492 / JCM 21426 / NBRC 103028 / MMB-1).